A 104-amino-acid polypeptide reads, in one-letter code: DNA-directed RNA polymerase subunit Rpo13 (104 aa).

2 disordered regions span residues 1–34 and 76–104; these read MVSG…EEFP and EKRD…SVEG. The span at 7–31 shows a compositional bias: acidic residues; that stretch reads TEEEKEGTNDEEVSEEREVEETSEE. Position 32 (Glu32) interacts with DNA. Basic residues predominate over residues 80 to 104; sequence SRRKAKKAASKKVKKTKKKEKSVEG. Residues 81 to 104 are required to bind DNA; that stretch reads RRKAKKAASKKVKKTKKKEKSVEG.

It belongs to the archaeal Rpo13 RNA polymerase subunit family. Part of the 13-subunit RNA polymerase complex. Rpo1N and Rpo5 form a cleft which docks Rpo13. Forms predominantly dimers in solution, although monomers and trimers can also be seen. Found associated with RNAP but also as a homodimer pool in the cytoplasm in vivo.

The protein resides in the cytoplasm. It catalyses the reaction RNA(n) + a ribonucleoside 5'-triphosphate = RNA(n+1) + diphosphate. Its function is as follows. DNA-dependent RNA polymerase (RNAP) catalyzes the transcription of DNA into RNA using the four ribonucleoside triphosphates as substrates. A molten-globule protein, it binds dsDNA in the RNAP, in vitro binds dsDNA but not ssDNA. Its position in RNAP implies it functions in both transcription initiation and elongation. This is DNA-directed RNA polymerase subunit Rpo13 from Saccharolobus shibatae (strain ATCC 51178 / DSM 5389 / JCM 8931 / NBRC 15437 / B12) (Sulfolobus shibatae).